Consider the following 493-residue polypeptide: GTPase Der (493 aa).

2 EngA-type G domains span residues 3 to 166 and 207 to 380; these read PVVA…SGKG and LKLA…DCAT. GTP is bound by residues 9-16, 56-60, 118-121, 213-220, 260-264, and 325-328; these read GRPNVGKS, DTGGI, NKTD, GKPNVGKS, DTAGV, and NKWD. The KH-like domain maps to 381–465; the sequence is RRVNTSLLTR…PIRIQFKEGA (85 aa).

It belongs to the TRAFAC class TrmE-Era-EngA-EngB-Septin-like GTPase superfamily. EngA (Der) GTPase family. As to quaternary structure, associates with the 50S ribosomal subunit.

GTPase that plays an essential role in the late steps of ribosome biogenesis. In Photorhabdus laumondii subsp. laumondii (strain DSM 15139 / CIP 105565 / TT01) (Photorhabdus luminescens subsp. laumondii), this protein is GTPase Der.